A 210-amino-acid polypeptide reads, in one-letter code: Imidazoleglycerol-phosphate dehydratase (210 aa).

Belongs to the imidazoleglycerol-phosphate dehydratase family.

The protein resides in the cytoplasm. It carries out the reaction D-erythro-1-(imidazol-4-yl)glycerol 3-phosphate = 3-(imidazol-4-yl)-2-oxopropyl phosphate + H2O. The protein operates within amino-acid biosynthesis; L-histidine biosynthesis; L-histidine from 5-phospho-alpha-D-ribose 1-diphosphate: step 6/9. The protein is Imidazoleglycerol-phosphate dehydratase of Acidovorax ebreus (strain TPSY) (Diaphorobacter sp. (strain TPSY)).